The sequence spans 364 residues: Aminomethyltransferase (364 aa).

Belongs to the GcvT family. The glycine cleavage system is composed of four proteins: P, T, L and H.

The catalysed reaction is N(6)-[(R)-S(8)-aminomethyldihydrolipoyl]-L-lysyl-[protein] + (6S)-5,6,7,8-tetrahydrofolate = N(6)-[(R)-dihydrolipoyl]-L-lysyl-[protein] + (6R)-5,10-methylene-5,6,7,8-tetrahydrofolate + NH4(+). Functionally, the glycine cleavage system catalyzes the degradation of glycine. The polypeptide is Aminomethyltransferase (Klebsiella pneumoniae subsp. pneumoniae (strain ATCC 700721 / MGH 78578)).